Consider the following 215-residue polypeptide: Guanylate kinase (215 aa).

A Guanylate kinase-like domain is found at 6–185; it reads GAILVLSGPS…SEKLLLSIAR (180 aa). Residue 13-20 participates in ATP binding; it reads GPSGSGKS.

It belongs to the guanylate kinase family.

The protein resides in the cytoplasm. The catalysed reaction is GMP + ATP = GDP + ADP. Essential for recycling GMP and indirectly, cGMP. This Wolinella succinogenes (strain ATCC 29543 / DSM 1740 / CCUG 13145 / JCM 31913 / LMG 7466 / NCTC 11488 / FDC 602W) (Vibrio succinogenes) protein is Guanylate kinase.